A 1291-amino-acid polypeptide reads, in one-letter code: Cytoplasmic FMR1-interacting protein (1291 aa).

A disordered region spans residues histidine 1269 to asparagine 1291. The span at serine 1271–asparagine 1291 shows a compositional bias: polar residues.

The protein belongs to the CYFIP family. In terms of assembly, interacts with Fmr1 and Rac1. Component of the WAVE complex composed of Hem/Kette, Scar/Wave and Cyfip where it binds through its C-terminus directly to Hem.

The protein localises to the cytoplasm. Its function is as follows. Plays a role in guidance and morphology of central and peripheral axons and in synaptic morphology. Also required for formation of cell membrane protrusions and for bristle development. This Drosophila pseudoobscura pseudoobscura (Fruit fly) protein is Cytoplasmic FMR1-interacting protein.